We begin with the raw amino-acid sequence, 436 residues long: Testican-3 (436 aa).

Residues 1-21 (MLKVSAVLCVCAAAWCSQSLA) form the signal peptide. Intrachain disulfides connect cysteine 90–cysteine 101, cysteine 95–cysteine 111, cysteine 139–cysteine 169, cysteine 142–cysteine 162, cysteine 151–cysteine 183, cysteine 317–cysteine 341, cysteine 352–cysteine 359, and cysteine 361–cysteine 380. Residues 133–185 (GPILSTCKQCPVVYPSPVCGSDGHTYSFQCKLEYQACVLGKQISVKCEGHCPC) enclose the Kazal-like domain. Residues 314-380 (DPPCQTELSN…GSRINGVADC (67 aa)) form the Thyroglobulin type-1 domain. 2 O-linked (Xyl...) (glycosaminoglycan) serine glycosylation sites follow: serine 387 and serine 392. A disordered region spans residues 393 to 436 (GDFHEWTDDEDDEDDIMNDEDEIEDDDEDEGDDDDGGDDHDVYI). The span at 399–430 (TDDEDDEDDIMNDEDEIEDDDEDEGDDDDGGD) shows a compositional bias: acidic residues.

In terms of processing, contains chondroitin sulfate and heparan sulfate O-linked oligosaccharides. As to expression, expressed in brain.

It is found in the secreted. The protein localises to the extracellular space. The protein resides in the extracellular matrix. Its function is as follows. May participate in diverse steps of neurogenesis. Inhibits the processing of pro-matrix metalloproteinase 2 (MMP-2) by MT1-MMP and MT3-MMP. May interfere with tumor invasion. This Homo sapiens (Human) protein is Testican-3 (SPOCK3).